The chain runs to 278 residues: Indole-3-glycerol phosphate synthase (278 aa).

It belongs to the TrpC family.

It carries out the reaction 1-(2-carboxyphenylamino)-1-deoxy-D-ribulose 5-phosphate + H(+) = (1S,2R)-1-C-(indol-3-yl)glycerol 3-phosphate + CO2 + H2O. It participates in amino-acid biosynthesis; L-tryptophan biosynthesis; L-tryptophan from chorismate: step 4/5. This chain is Indole-3-glycerol phosphate synthase, found in Pseudomonas fluorescens (strain Pf0-1).